The chain runs to 291 residues: Elongation factor Ts (291 aa).

Residues 84-87 form an involved in Mg(2+) ion dislocation from EF-Tu region; it reads TDFV.

Belongs to the EF-Ts family.

It localises to the cytoplasm. Its function is as follows. Associates with the EF-Tu.GDP complex and induces the exchange of GDP to GTP. It remains bound to the aminoacyl-tRNA.EF-Tu.GTP complex up to the GTP hydrolysis stage on the ribosome. This Bifidobacterium adolescentis (strain ATCC 15703 / DSM 20083 / NCTC 11814 / E194a) protein is Elongation factor Ts.